The primary structure comprises 590 residues: Rho GTPase-activating protein 36 (590 aa).

In terms of domain architecture, Rho-GAP spans 214-414 (MSLNPIAQQI…AMIDNWDILF (201 aa)). The tract at residues 526-590 (IPNNEDTDSD…KGKFATRFFP (65 aa)) is disordered.

In terms of assembly, may interacts (via the Rho-GAP domain) with the active form of RAC1.

Its function is as follows. GTPase activator for the Rho-type GTPases by converting them to an inactive GDP-bound state. In Mus musculus (Mouse), this protein is Rho GTPase-activating protein 36 (Arhgap36).